A 716-amino-acid polypeptide reads, in one-letter code: ATP-dependent DNA helicase DinG (716 aa).

Positions 1–114 are HD1 domain N-terminus; it reads MALTAALKAQ…PDLKFTAAFG (114 aa). The Helicase ATP-binding domain maps to 17–294; the sequence is ALQEQIPDFI…TCMEQFRPKT (278 aa). ATP contacts are provided by Ile-26, Gln-31, Lys-60, and Thr-61. Positions 115 to 216 are [4Fe-4S] domain; sequence RGRYVCPRNL…FFVARREIQE (102 aa). [4Fe-4S] cluster-binding residues include Cys-120, Cys-194, Cys-199, and Cys-205. Residues 217-261 form an HD1 domain middle region; sequence AEVVVANHALVMAAMESEAVLPDPKNLLLVLDEGHHLPDVARDAL. Positions 248-251 match the DEAH box motif; that stretch reads DEGH. Positions 262-438 are arch domain; that stretch reads EMSAEITAPW…LHLWFHCVGI (177 aa). Residues 439–491 are HD1 domain middle; sequence RVSDQLERLLWRSIPHIIVTSATLRSLNSFSRLQEMSGLKEKAGDRFVALDSP. Residues 492–716 form an HD2 domain region; the sequence is FNHCEQGKIV…KTKSPRRRRR (225 aa). 3 residues coordinate ATP: Asp-599, Arg-656, and Arg-659.

Belongs to the helicase family. DinG subfamily. Type 1 sub-subfamily. Monomer in solution. The cofactor is [4Fe-4S] cluster. Mg(2+) is required as a cofactor.

The enzyme catalyses Couples ATP hydrolysis with the unwinding of duplex DNA at the replication fork by translocating in the 5'-3' direction. This creates two antiparallel DNA single strands (ssDNA). The leading ssDNA polymer is the template for DNA polymerase III holoenzyme which synthesizes a continuous strand.. The catalysed reaction is ATP + H2O = ADP + phosphate + H(+). With respect to regulation, ATPase activity is 15-fold stimulated by single-stranded DNA (ssDNA). Reduction of the [4Fe-4S] cluster reversibly switches off helicase activity. Remains fully active after exposure to 100-fold excess of hydrogen peroxide, but the [4Fe-4S] cluster can be efficiently modified by nitric oxide (NO), forming the DinG-bound dinitrosyl iron complex with the concomitant inactivation of helicase activity. Helicase activity on G-quadruplex DNA is inhibited by porphyrin derivatives meso-tetra (N-methyl-4-pyridyl) porphine tetra tosylate (T4) and N-methyl mesoporphyrin IX (NMM). Helicase activity on forked duplexes is not inhibited by T4 or NMM. G-quadruplex ligands such as Pyridostatin, PhenDC3, BRACO-19 and Netropsin can alter recognition and unwinding of G-quadruplex DNAs; the effect is both ligand- and G-quadruplex DNA-specific. DNA-dependent ATPase and 5'-3' DNA helicase. Can also unwind DNA:RNA hybrid duplexes. Is active on D-loops, R-loops, and on forked structures. Unwinds G-quadruplex DNA in a 5'-3' direction; unwinding efficiency differs on different substrates. Does not appear to unwind replication forks or Holliday junctions. Translocates on single-stranded (ss)DNA with a 5'-3' polarity. In vitro at high concentrations also unwinds in a 3'-5' direction. May be involved in recombinational DNA repair and the resumption of replication after DNA damage. The [4Fe-4S] cluster is redox active at cellular potentials and is involved in DNA-mediated charge-transport signaling between DNA repair proteins from distinct pathways. DinG cooperates at long-range with endonuclease III, a base excision repair enzyme, using DNA charge transport to redistribute to regions of DNA damage. Binds 10-11 nucleotides of ssDNA in a positively-charged groove across the helicase domains. The protein is ATP-dependent DNA helicase DinG of Escherichia coli (strain K12).